Reading from the N-terminus, the 495-residue chain is Lysine--tRNA ligase (495 aa).

Glutamate 406 and glutamate 413 together coordinate Mg(2+).

This sequence belongs to the class-II aminoacyl-tRNA synthetase family. As to quaternary structure, homodimer. Mg(2+) serves as cofactor.

The protein resides in the cytoplasm. It catalyses the reaction tRNA(Lys) + L-lysine + ATP = L-lysyl-tRNA(Lys) + AMP + diphosphate. The chain is Lysine--tRNA ligase (lysS) from Staphylococcus aureus.